The chain runs to 220 residues: Uracil-DNA glycosylase (220 aa).

Asp-65 (proton acceptor) is an active-site residue.

Belongs to the uracil-DNA glycosylase (UDG) superfamily. UNG family.

It is found in the cytoplasm. The catalysed reaction is Hydrolyzes single-stranded DNA or mismatched double-stranded DNA and polynucleotides, releasing free uracil.. In terms of biological role, excises uracil residues from the DNA which can arise as a result of misincorporation of dUMP residues by DNA polymerase or due to deamination of cytosine. The chain is Uracil-DNA glycosylase from Amoebophilus asiaticus (strain 5a2).